The chain runs to 305 residues: Glycine--tRNA ligase alpha subunit (305 aa).

Belongs to the class-II aminoacyl-tRNA synthetase family. As to quaternary structure, tetramer of two alpha and two beta subunits.

The protein resides in the cytoplasm. It catalyses the reaction tRNA(Gly) + glycine + ATP = glycyl-tRNA(Gly) + AMP + diphosphate. The polypeptide is Glycine--tRNA ligase alpha subunit (Streptococcus pneumoniae (strain 70585)).